The primary structure comprises 230 residues: Ion-translocating oxidoreductase complex subunit E (230 aa).

A run of 6 helical transmembrane segments spans residues alanine 18–alanine 38, leucine 39–isoleucine 59, isoleucine 69–alanine 89, glycine 93–glycine 113, valine 124–valine 144, and serine 182–leucine 202.

Belongs to the NqrDE/RnfAE family. In terms of assembly, the complex is composed of six subunits: RnfA, RnfB, RnfC, RnfD, RnfE and RnfG.

The protein localises to the cell inner membrane. Functionally, part of a membrane-bound complex that couples electron transfer with translocation of ions across the membrane. This Vibrio parahaemolyticus serotype O3:K6 (strain RIMD 2210633) protein is Ion-translocating oxidoreductase complex subunit E.